Reading from the N-terminus, the 865-residue chain is MPNIIRKLVENDKKELKKLNRMALQVESFADEMEHLTDEQLKAKTPELKERIAKGESLDDLLYEAFAVCREAARRVLGLYPFHVQIMGGIVLHNGDVPEMRTGEGKTLTATMPVYLNALSGKGVHVVTVNEYLATRDMTEMGELYSWLGLTVGLNLNSKSPEEKREAYNCDITYSTSAELGFDYLRDNMVTRAEDMVQKPLNYALVDEVDSILVDEARTPLIISGQAESSSALYYRADQFTKTLKGQNLNVATSEYEEGDDYKIDLQSKTISLTEEGIDKAEKFFQIENLYDMENVALTHFVDNALRANFIMLHDIDYMVDENQEVLIIDQFTGRTMPGRRYSDGLHQAIEAKEAVPIQDESKTMASITIQNYFRMYKKLSGMTGTAKTEEEEFREIYNIQITPIPTNRPVQRLDHPDLLYPTLEAKFKAVIDDIKRRHAEGQPILIGTVAVETSELISKKLVEAKIPHEVLNAKNHFREAQIIMNAGQQGAVTIATNMAGRGTDIKLGPGVIDHVDPEFRGLAVIGTERHESRRIDNQLRGRSGRQGDPGVSQFYLSLEDELMKRFGSERVSAFLDRMRISGEDAVIKSGLITRQIESSQKRVEGNNYDSRKQVLQYDDVIREQREVIYAQRQEVILATEDMTPVLMGMFKRTIDRQVDGHELAGSLKDEENVKNLLQTLHNTMLPEDGIELSELTGLSVQAMKDLIFDKVKARYASQMEKLSDPERQLEFQRAVILRVVDNNWSEHIDALDQMRQSVGLRGYAQNNPIVEYQEESYKMYNNMIGAIEFEVTRLMMKAQIQPQTAIRQEAPRMTTTASQENITNVDTEHSVSEEISFENVGRNDLCPCGSGKKFKNCHGRTHIA.

Residues Gln85, 103–107 (GEGKT), and Asp505 contribute to the ATP site. Zn(2+)-binding residues include Cys847, Cys849, Cys858, and His859.

Belongs to the SecA family. As to quaternary structure, monomer and homodimer. Part of the essential Sec protein translocation apparatus which comprises SecA, SecYEG and auxiliary proteins SecDF. Other proteins may also be involved. The cofactor is Zn(2+).

It localises to the cell membrane. Its subcellular location is the cytoplasm. It catalyses the reaction ATP + H2O + cellular proteinSide 1 = ADP + phosphate + cellular proteinSide 2.. Part of the Sec protein translocase complex. Interacts with the SecYEG preprotein conducting channel. Has a central role in coupling the hydrolysis of ATP to the transfer of proteins into and across the cell membrane, serving as an ATP-driven molecular motor driving the stepwise translocation of polypeptide chains across the membrane. The chain is Protein translocase subunit SecA from Lactococcus lactis subsp. lactis (strain IL1403) (Streptococcus lactis).